Consider the following 66-residue polypeptide: Large ribosomal subunit protein uL29 (66 aa).

It belongs to the universal ribosomal protein uL29 family.

This Thermococcus gammatolerans (strain DSM 15229 / JCM 11827 / EJ3) protein is Large ribosomal subunit protein uL29.